We begin with the raw amino-acid sequence, 585 residues long: Pheromone-processing carboxypeptidase KEX1 (585 aa).

An N-terminal signal peptide occupies residues methionine 1 to glycine 18. The Lumenal segment spans residues asparagine 19–lysine 469. Catalysis depends on residues serine 135 and aspartate 335. Asparagine 386 and asparagine 394 each carry an N-linked (GlcNAc...) asparagine glycan. Histidine 397 is a catalytic residue. Asparagine 447 carries N-linked (GlcNAc...) asparagine glycosylation. Residues serine 470–tryptophan 490 form a helical membrane-spanning segment. Residues arginine 491–glycine 585 lie on the Cytoplasmic side of the membrane. The disordered stretch occupies residues alanine 526–glycine 585. Acidic residues predominate over residues glutamate 530–leucine 539. Over residues valine 575–glycine 585 the composition is skewed to basic and acidic residues.

The protein belongs to the peptidase S10 family.

It is found in the golgi apparatus. It localises to the trans-Golgi network membrane. The enzyme catalyses Preferential release of a C-terminal arginine or lysine residue.. Protease with a carboxypeptidase B-like function involved in the C-terminal processing of the lysine and arginine residues from protein precursors. Promotes cell fusion and is involved in the programmed cell death. The sequence is that of Pheromone-processing carboxypeptidase KEX1 (KEX1) from Podospora anserina (strain S / ATCC MYA-4624 / DSM 980 / FGSC 10383) (Pleurage anserina).